Here is a 227-residue protein sequence, read N- to C-terminus: Lectin (227 aa).

The first 28 residues, 1–28, serve as a signal peptide directing secretion; that stretch reads MTMTSTTTKAMAMAAAVLAAAAVAATNA. Gln-29 bears the Pyrrolidone carboxylic acid mark. Chitin-binding type-1 domains follow at residues 29 to 70, 71 to 113, 114 to 156, and 157 to 199; these read QTCG…ACCS, SQRC…PCRA, DIKC…ACCP, and EKRC…GCYK. Cystine bridges form between Cys-31-Cys-46, Cys-40-Cys-52, Cys-45-Cys-59, Cys-63-Cys-68, Cys-74-Cys-89, Cys-83-Cys-95, Cys-88-Cys-102, Cys-106-Cys-111, Cys-117-Cys-132, Cys-126-Cys-138, Cys-131-Cys-145, Cys-149-Cys-154, Cys-160-Cys-175, Cys-169-Cys-181, Cys-174-Cys-188, and Cys-192-Cys-197. Residue 38–40 participates in substrate binding; that stretch reads MIC. Position 90–101 (90–101) interacts with substrate; it reads SQYGYCGFGSEY. Substrate is bound at residue 142 to 143; that stretch reads SE. Positions 202 to 227 are excised as a propeptide; it reads DGMAAILANNQSVSFEGIIESVAELV. Asn-211 carries an N-linked (GlcNAc...) asparagine glycan.

In terms of biological role, N-acetyl-D-glucosamine binding lectin. The chain is Lectin from Oryza sativa subsp. indica (Rice).